The primary structure comprises 76 residues: Endothelin-1 (76 aa).

The endothelin-like stretch occupies residues 30–44 (CQCASQKDKKCWNFC).

It belongs to the endothelin/sarafotoxin family.

Its subcellular location is the secreted. In terms of biological role, endothelins are endothelium-derived vasoconstrictor peptides. Probable ligand for G-protein coupled receptors EDNRA and EDNRB which activates PTK2B, BCAR1, BCAR3 and, GTPases RAP1 and RHOA cascade in glomerular mesangial cells. Also binds the DEAR/FBXW7-AS1 receptor. Promotes mesenteric arterial wall remodeling via activation of ROCK signaling and subsequent colocalization of NFATC3 with F-actin filaments. NFATC3 then translocates to the nucleus where it subsequently promotes the transcription of the smooth muscle hypertrophy and differentiation marker ACTA2. The protein is Endothelin-1 (EDN1) of Macaca fascicularis (Crab-eating macaque).